The following is a 510-amino-acid chain: Bifunctional purine biosynthesis protein PurH (510 aa).

An MGS-like domain is found at 1–143 (MTKRALISVS…KNHSGVLVLV (143 aa)).

It belongs to the PurH family.

It carries out the reaction (6R)-10-formyltetrahydrofolate + 5-amino-1-(5-phospho-beta-D-ribosyl)imidazole-4-carboxamide = 5-formamido-1-(5-phospho-D-ribosyl)imidazole-4-carboxamide + (6S)-5,6,7,8-tetrahydrofolate. The catalysed reaction is IMP + H2O = 5-formamido-1-(5-phospho-D-ribosyl)imidazole-4-carboxamide. It functions in the pathway purine metabolism; IMP biosynthesis via de novo pathway; 5-formamido-1-(5-phospho-D-ribosyl)imidazole-4-carboxamide from 5-amino-1-(5-phospho-D-ribosyl)imidazole-4-carboxamide (10-formyl THF route): step 1/1. The protein operates within purine metabolism; IMP biosynthesis via de novo pathway; IMP from 5-formamido-1-(5-phospho-D-ribosyl)imidazole-4-carboxamide: step 1/1. This is Bifunctional purine biosynthesis protein PurH from Deinococcus deserti (strain DSM 17065 / CIP 109153 / LMG 22923 / VCD115).